Reading from the N-terminus, the 2199-residue chain is DNA polymerase epsilon catalytic subunit A (2199 aa).

Zn(2+) is bound by residues C2069, C2072, C2104, and C2107. The CysA-type zinc finger occupies 2069 to 2107 (CKQCGVHQDFDLCLHEHLWPTRDDMGTLVFSDGWSCSSC). The [4Fe-4S] cluster site is built by C2138, C2141, C2153, and C2155. The CysB motif signature appears at 2138–2155 (CSKCKTVKQWSLKERCSC).

Belongs to the DNA polymerase type-B family. Heterotetramer. Consists of 4 subunits: pol2, dpb2, dpb3 and dpb4. Requires [4Fe-4S] cluster as cofactor.

It is found in the nucleus. The enzyme catalyses DNA(n) + a 2'-deoxyribonucleoside 5'-triphosphate = DNA(n+1) + diphosphate. Functionally, DNA polymerase II participates in chromosomal DNA replication. This is DNA polymerase epsilon catalytic subunit A (pol2) from Schizosaccharomyces pombe (strain 972 / ATCC 24843) (Fission yeast).